Reading from the N-terminus, the 246-residue chain is 4-hydroxy-tetrahydrodipicolinate reductase (246 aa).

7 to 12 provides a ligand contact to NAD(+); that stretch reads GCSGRM. R34 lines the NADP(+) pocket. NAD(+) is bound by residues 76–78 and 102–105; these read ATT and CPNT. The Proton donor/acceptor role is filled by H135. H136 contacts (S)-2,3,4,5-tetrahydrodipicolinate. The active-site Proton donor is K139. 145–146 is a (S)-2,3,4,5-tetrahydrodipicolinate binding site; that stretch reads GT.

Belongs to the DapB family.

It localises to the cytoplasm. The catalysed reaction is (S)-2,3,4,5-tetrahydrodipicolinate + NAD(+) + H2O = (2S,4S)-4-hydroxy-2,3,4,5-tetrahydrodipicolinate + NADH + H(+). The enzyme catalyses (S)-2,3,4,5-tetrahydrodipicolinate + NADP(+) + H2O = (2S,4S)-4-hydroxy-2,3,4,5-tetrahydrodipicolinate + NADPH + H(+). Its pathway is amino-acid biosynthesis; L-lysine biosynthesis via DAP pathway; (S)-tetrahydrodipicolinate from L-aspartate: step 4/4. Functionally, catalyzes the conversion of 4-hydroxy-tetrahydrodipicolinate (HTPA) to tetrahydrodipicolinate. The polypeptide is 4-hydroxy-tetrahydrodipicolinate reductase (Chlamydia caviae (strain ATCC VR-813 / DSM 19441 / 03DC25 / GPIC) (Chlamydophila caviae)).